A 61-amino-acid chain; its full sequence is Beta-toxin Tce4 (61 aa).

The LCN-type CS-alpha/beta domain occupies 1–61 (KEGYLMDHEG…KVWEYATNRC (61 aa)). Cystine bridges form between C11–C61, C15–C37, C23–C42, and C27–C44. C61 is subject to Cysteine amide.

It belongs to the long (4 C-C) scorpion toxin superfamily. Sodium channel inhibitor family. Beta subfamily. As to expression, expressed by the venom gland.

Its subcellular location is the secreted. Functionally, beta toxins bind voltage-independently at site-4 of sodium channels (Nav) and shift the voltage of activation toward more negative potentials thereby affecting sodium channel activation and promoting spontaneous and repetitive firing. The chain is Beta-toxin Tce4 from Tityus cerroazul (Scorpion).